The sequence spans 213 residues: Small ribosomal subunit protein eS6 (213 aa).

It belongs to the eukaryotic ribosomal protein eS6 family.

This chain is Small ribosomal subunit protein eS6, found in Sulfolobus acidocaldarius (strain ATCC 33909 / DSM 639 / JCM 8929 / NBRC 15157 / NCIMB 11770).